The sequence spans 235 residues: Probable inactive serine protease 37 (235 aa).

Positions 1–19 (MKFTFCLTVLAGTFFSAHS) are cleaved as a signal peptide. The Peptidase S1 domain maps to 20-233 (SVQKDDPSPY…YVSWIESTTK (214 aa)). Intrachain disulfides connect C40–C56, C131–C198, and C163–C177.

It belongs to the peptidase S1 family.

Its subcellular location is the cytoplasmic vesicle. The protein resides in the secretory vesicle. The protein localises to the acrosome. It localises to the secreted. Functionally, plays a role in male fertility. May have a role in sperm migration or binding to zona-intact eggs. Involved in the activation of the proacrosin/acrosin system. The chain is Probable inactive serine protease 37 from Bos taurus (Bovine).